Consider the following 55-residue polypeptide: ATP synthase F(0) complex subunit 8 (55 aa).

Residues 8 to 24 (PWFSIMVMTWLTLALLI) traverse the membrane as a helical segment. The segment at 35 to 55 (NPPSKKPSLITKPTPWAWPWT) is disordered.

It belongs to the ATPase protein 8 family. Component of the ATP synthase complex composed at least of ATP5F1A/subunit alpha, ATP5F1B/subunit beta, ATP5MC1/subunit c (homooctomer), MT-ATP6/subunit a, MT-ATP8/subunit 8, ATP5ME/subunit e, ATP5MF/subunit f, ATP5MG/subunit g, ATP5MK/subunit k, ATP5MJ/subunit j, ATP5F1C/subunit gamma, ATP5F1D/subunit delta, ATP5F1E/subunit epsilon, ATP5PF/subunit F6, ATP5PB/subunit b, ATP5PD/subunit d, ATP5PO/subunit OSCP. ATP synthase complex consists of a soluble F(1) head domain (subunits alpha(3) and beta(3)) - the catalytic core - and a membrane F(0) domain - the membrane proton channel (subunits c, a, 8, e, f, g, k and j). These two domains are linked by a central stalk (subunits gamma, delta, and epsilon) rotating inside the F1 region and a stationary peripheral stalk (subunits F6, b, d, and OSCP).

It localises to the mitochondrion membrane. Subunit 8, of the mitochondrial membrane ATP synthase complex (F(1)F(0) ATP synthase or Complex V) that produces ATP from ADP in the presence of a proton gradient across the membrane which is generated by electron transport complexes of the respiratory chain. ATP synthase complex consist of a soluble F(1) head domain - the catalytic core - and a membrane F(1) domain - the membrane proton channel. These two domains are linked by a central stalk rotating inside the F(1) region and a stationary peripheral stalk. During catalysis, ATP synthesis in the catalytic domain of F(1) is coupled via a rotary mechanism of the central stalk subunits to proton translocation. In vivo, can only synthesize ATP although its ATP hydrolase activity can be activated artificially in vitro. Part of the complex F(0) domain. The sequence is that of ATP synthase F(0) complex subunit 8 from Anas platyrhynchos (Mallard).